Consider the following 243-residue polypeptide: 1-(5-phosphoribosyl)-5-[(5-phosphoribosylamino)methylideneamino] imidazole-4-carboxamide isomerase (243 aa).

Aspartate 8 functions as the Proton acceptor in the catalytic mechanism. The active-site Proton donor is the aspartate 129.

The protein belongs to the HisA/HisF family.

Its subcellular location is the cytoplasm. The enzyme catalyses 1-(5-phospho-beta-D-ribosyl)-5-[(5-phospho-beta-D-ribosylamino)methylideneamino]imidazole-4-carboxamide = 5-[(5-phospho-1-deoxy-D-ribulos-1-ylimino)methylamino]-1-(5-phospho-beta-D-ribosyl)imidazole-4-carboxamide. It functions in the pathway amino-acid biosynthesis; L-histidine biosynthesis; L-histidine from 5-phospho-alpha-D-ribose 1-diphosphate: step 4/9. The protein is 1-(5-phosphoribosyl)-5-[(5-phosphoribosylamino)methylideneamino] imidazole-4-carboxamide isomerase of Syntrophotalea carbinolica (strain DSM 2380 / NBRC 103641 / GraBd1) (Pelobacter carbinolicus).